Here is a 122-residue protein sequence, read N- to C-terminus: UPF0102 protein XOO3839 (122 aa).

It belongs to the UPF0102 family.

In Xanthomonas oryzae pv. oryzae (strain KACC10331 / KXO85), this protein is UPF0102 protein XOO3839.